Here is a 729-residue protein sequence, read N- to C-terminus: Phosphoribosylformylglycinamidine synthase subunit PurL (729 aa).

Residue H54 is part of the active site. Y57 and K96 together coordinate ATP. E98 serves as a coordination point for Mg(2+). Substrate is bound by residues 99–102 (SHNH) and R121. The active-site Proton acceptor is H100. A Mg(2+)-binding site is contributed by D122. Substrate is bound at residue Q245. D273 serves as a coordination point for Mg(2+). Residue 317-319 (ETQ) coordinates substrate. D495 and G532 together coordinate ATP. Position 533 (N533) interacts with Mg(2+). S535 is a substrate binding site.

The protein belongs to the FGAMS family. Monomer. Part of the FGAM synthase complex composed of 1 PurL, 1 PurQ and 2 PurS subunits.

The protein localises to the cytoplasm. The catalysed reaction is N(2)-formyl-N(1)-(5-phospho-beta-D-ribosyl)glycinamide + L-glutamine + ATP + H2O = 2-formamido-N(1)-(5-O-phospho-beta-D-ribosyl)acetamidine + L-glutamate + ADP + phosphate + H(+). The protein operates within purine metabolism; IMP biosynthesis via de novo pathway; 5-amino-1-(5-phospho-D-ribosyl)imidazole from N(2)-formyl-N(1)-(5-phospho-D-ribosyl)glycinamide: step 1/2. Part of the phosphoribosylformylglycinamidine synthase complex involved in the purines biosynthetic pathway. Catalyzes the ATP-dependent conversion of formylglycinamide ribonucleotide (FGAR) and glutamine to yield formylglycinamidine ribonucleotide (FGAM) and glutamate. The FGAM synthase complex is composed of three subunits. PurQ produces an ammonia molecule by converting glutamine to glutamate. PurL transfers the ammonia molecule to FGAR to form FGAM in an ATP-dependent manner. PurS interacts with PurQ and PurL and is thought to assist in the transfer of the ammonia molecule from PurQ to PurL. In Staphylococcus epidermidis (strain ATCC 35984 / DSM 28319 / BCRC 17069 / CCUG 31568 / BM 3577 / RP62A), this protein is Phosphoribosylformylglycinamidine synthase subunit PurL.